The chain runs to 168 residues: Cell division inhibitor SulA (168 aa).

The segment at 105–111 (ALQTGNY) is ftsZ binding.

It belongs to the SulA family. In terms of assembly, interacts with FtsZ. Is rapidly cleaved and degraded by the Lon protease once DNA damage is repaired.

Component of the SOS system and an inhibitor of cell division. Accumulation of SulA causes rapid cessation of cell division and the appearance of long, non-septate filaments. In the presence of GTP, binds a polymerization-competent form of FtsZ in a 1:1 ratio, thus inhibiting FtsZ polymerization and therefore preventing it from participating in the assembly of the Z ring. This mechanism prevents the premature segregation of damaged DNA to daughter cells during cell division. The polypeptide is Cell division inhibitor SulA (Erwinia pyrifoliae (strain DSM 12163 / CIP 106111 / Ep16/96)).